The chain runs to 1008 residues: MASSPLPGPNDILLASPSSAFQPDALSQPRPGHANLKPNQVGQVILYGIPIVSLVIDGQERLCLAQISNTLLKNFSYNEIHNRRVALGITCVQCTPVQLEILRRAGAMPISSRRCGMITKREAERLCKSFLGENRPPKLPDNFAFDVSHECAWGCRGSFIPARYNSSRAKCIKCSYCNMYFSPNKFIFHSHRTPDAKYTQPDAANFNSWRRHLKLTDKSPQDELVFAWEDVKAMFNGGSRKRALPQPSAHPACHPLSSVKAAAVAAAAAVAGGGGLLGPHLLGAPPPPPPPPPLAELAGAPHAHHKRPRFDDDDDSLQEAAVVAAASLSAAAASLSVAAATGGAGPGAGGPGGGCVAGVGVGASAGAGAAAGTKGPRSYPVIPVPSKGSFGGVLQKFPGCGGLFPHPYTFPAAAAAFGLCHKKEDAGTAAEALGGAGAGSAGAAPKAGLSGLFWPAGRKDAFYPPFCMFWPPRTPGGLPVPTYLQPPPQPPSALGCALGDSPALLRQAFLDLAEPGGAGGSAEAAPPPGQPPPVVANGPGSGPPATGGTGARDTLFESPPGGSGGDCSAGSTPPAEQGVTSGTGSASSGAGSVGTRVPAPHHPHLLEGRKAGGGSYHHSSAFRPVGGKDDAESLAKLHGASAGTPHSAPAHHHHHHHHPHHHHHHPPQPPSPLLLLQPQPDEPGSERHHPAPPPPPPPPPLAPQPHHRGLLSPEGTSCSYPSEDSSEDEEDEEEEQEVDVEGHKPLEGEEEEDGRDPEDEEEEDEETRVLLGDSLVGGGRFLQGRGLSEKGSGRDRTTPAVGAFPLALNSSRLLQEDGKLGDSGGSDLPAPPPPPLAPQKASSSGGSRPGSPVHHPSLEEEPSYKDNQKPKENNQVIISTKDDNFSDKNKGHGFFITDSDSSGDFWRERSGEHTQETNSPHSLKKDVENMGKEELQKVLFEQIDLRRRLEQEFQVLKGNTSFPVFNNFQDQMKRELAYREEMVQQLQIIPYAASLIRKEKLGAHLSKS.

Disordered regions lie at residues histidine 280 to aspartate 315 and glutamate 514 to valine 927. Composition is skewed to pro residues over residues alanine 284–leucine 294 and alanine 525–valine 534. Composition is skewed to low complexity over residues valine 535–proline 544 and glycine 578–threonine 595. A compositionally biased stretch (basic and acidic residues) spans glycine 626–alanine 635. Over residues proline 649–proline 666 the composition is skewed to basic residues. Residues alanine 691 to proline 703 are compositionally biased toward pro residues. Composition is skewed to acidic residues over residues aspartate 724–aspartate 739 and glycine 748–glutamate 766. Residues leucine 787–threonine 797 are compositionally biased toward basic and acidic residues. Residues serine 842–histidine 855 show a composition bias toward low complexity. Basic and acidic residues-rich tracts occupy residues proline 856–glutamate 872, threonine 880–lysine 890, and phenylalanine 905–glutamine 915.

This sequence belongs to the SKI family. As to quaternary structure, interacts with SMAD2 and SMAD3. In terms of tissue distribution, expression is restricted to adult and embryonic central nervous system. Expressed at high levels in the developing cerebellum, ventral metencephalon and myelencephalon at 12.5 dpc (at protein level). In the adult cerebellum, expressed specifically in Purkinje cells.

The protein localises to the nucleus. It localises to the cytoplasm. In terms of biological role, acts as a TGF-beta antagonist in the nervous system. Exhibits transcriptional repressor activity. This Mus musculus (Mouse) protein is SKI family transcriptional corepressor 2.